Here is a 227-residue protein sequence, read N- to C-terminus: Phage shock protein A homolog (227 aa).

Positions L33–L125 form a coiled coil. A disordered region spans residues S191 to Q211.

The protein belongs to the PspA/Vipp/IM30 family.

In Bacillus subtilis (strain 168), this protein is Phage shock protein A homolog (ydjF).